A 235-amino-acid polypeptide reads, in one-letter code: 5'-methylthioadenosine/S-adenosylhomocysteine nucleosidase (235 aa).

E12 serves as the catalytic Proton acceptor. Residues G78, I152, and 173–174 (ME) each bind substrate. The active-site Proton donor is the D197.

Belongs to the PNP/UDP phosphorylase family. MtnN subfamily. In terms of assembly, homodimer.

It catalyses the reaction S-adenosyl-L-homocysteine + H2O = S-(5-deoxy-D-ribos-5-yl)-L-homocysteine + adenine. The catalysed reaction is S-methyl-5'-thioadenosine + H2O = 5-(methylsulfanyl)-D-ribose + adenine. It carries out the reaction 5'-deoxyadenosine + H2O = 5-deoxy-D-ribose + adenine. Its pathway is amino-acid biosynthesis; L-methionine biosynthesis via salvage pathway; S-methyl-5-thio-alpha-D-ribose 1-phosphate from S-methyl-5'-thioadenosine (hydrolase route): step 1/2. Functionally, catalyzes the irreversible cleavage of the glycosidic bond in both 5'-methylthioadenosine (MTA) and S-adenosylhomocysteine (SAH/AdoHcy) to adenine and the corresponding thioribose, 5'-methylthioribose and S-ribosylhomocysteine, respectively. Also cleaves 5'-deoxyadenosine, a toxic by-product of radical S-adenosylmethionine (SAM) enzymes, into 5-deoxyribose and adenine. Thus, is required for in vivo function of the radical SAM enzymes biotin synthase and lipoic acid synthase, that are inhibited by 5'-deoxyadenosine accumulation. This Proteus mirabilis (strain HI4320) protein is 5'-methylthioadenosine/S-adenosylhomocysteine nucleosidase.